The chain runs to 391 residues: MAKAKFERNKPHVNIGTIGHVDHGKTTLTAAITKYFGDFQAYDQIDGAPEEKARGITISTAHVEYETENRHYAHVDCPGHADYVKNMITGAAQMDGAILVVNAADGPMPQTREHILLGRQVGIPTMVVFMNKVDQVDDEELLELVEMEIRELLSSYDYPGDDIPVIPGSALAAMEGRDPEIGEEAIKKLMAAVDEFIPTPERAIDQPFLMPVEDVFSISGRGTVVTGRVERGVINVGDNIEIVGIKDTQSTTCTGVEMFRKLLDRGEAGDNIGALLRGIDREAVERGQVLCKPGSVKPHTKFEAEAYILTKDEGGRHTPFFANYRPQFYFRTTDVTGTVQLAEGTEMVMPGDNVSFGVELIAPIAMEQGLRFAIREGGRTVGAGVVSKITE.

The region spanning 10 to 201 (KPHVNIGTIG…AVDEFIPTPE (192 aa)) is the tr-type G domain. Residues 19-26 (GHVDHGKT) are G1. Residue 19-26 (GHVDHGKT) participates in GTP binding. Mg(2+) is bound at residue threonine 26. The tract at residues 55-59 (GITIS) is G2. Residues 76–79 (DCPG) form a G3 region. Residues 76 to 80 (DCPGH) and 131 to 134 (NKVD) contribute to the GTP site. A G4 region spans residues 131-134 (NKVD). Residues 169–171 (SAL) are G5.

The protein belongs to the TRAFAC class translation factor GTPase superfamily. Classic translation factor GTPase family. EF-Tu/EF-1A subfamily. In terms of assembly, monomer.

It localises to the cytoplasm. The enzyme catalyses GTP + H2O = GDP + phosphate + H(+). Functionally, GTP hydrolase that promotes the GTP-dependent binding of aminoacyl-tRNA to the A-site of ribosomes during protein biosynthesis. This chain is Elongation factor Tu, found in Roseobacter denitrificans (strain ATCC 33942 / OCh 114) (Erythrobacter sp. (strain OCh 114)).